The primary structure comprises 193 residues: Bcl-2-like protein 2 (193 aa).

A2 bears the N-acetylalanine mark. Residues 9–29 (DTRALVADFVGYKLRQKGYVC) carry the BH4 motif. A BH1 motif is present at residues 85 to 104 (ELFQGGPNWGRLVAFFVFGA). The BH2 signature appears at 136 to 151 (DWIHSSGGWAEFTALY).

Belongs to the Bcl-2 family. In terms of assembly, interacts with HIF3A (via C-terminus domain). Interacts with BOP.

Its subcellular location is the mitochondrion membrane. Promotes cell survival. Blocks dexamethasone-induced apoptosis. Mediates survival of postmitotic Sertoli cells by suppressing death-promoting activity of BAX. The polypeptide is Bcl-2-like protein 2 (BCL2L2) (Bos taurus (Bovine)).